Here is a 154-residue protein sequence, read N- to C-terminus: Ferredoxin C 1, chloroplastic (154 aa).

The transit peptide at 1 to 56 (MATLPLPTQTSTISLPKPYLSNSFSFPLRNATLSTTTNRRNFLTTGRIIARAYKVV) directs the protein to the chloroplast. A 2Fe-2S ferredoxin-type domain is found at 57-142 (VEHDGKTTEL…DCHIKMIPEE (86 aa)). [2Fe-2S] cluster-binding residues include cysteine 89, cysteine 94, cysteine 97, and cysteine 126.

This sequence belongs to the 2Fe2S plant-type ferredoxin family. Requires [2Fe-2S] cluster as cofactor.

The protein resides in the plastid. It is found in the chloroplast. Its function is as follows. Ferredoxins are iron-sulfur proteins that transfer electrons in a wide variety of metabolic reactions. Mediates alternative electron partitioning in conditions of acceptor limitation at photosystem I. Accepts electrons from photosystem I (PSI) and is capable of electron transfer with FNR, but cannot support photoreduction of NADP(+). The polypeptide is Ferredoxin C 1, chloroplastic (Arabidopsis thaliana (Mouse-ear cress)).